The following is a 32-amino-acid chain: Chlorophyll a-b binding protein 2, chloroplastic (32 aa).

Chlorophyll a contacts are provided by Glu-19 and His-22. Arg-24 provides a ligand contact to chlorophyll b.

This sequence belongs to the light-harvesting chlorophyll a/b-binding (LHC) protein family. The LHC complex consists of chlorophyll a-b binding proteins. Binds at least 14 chlorophylls (8 Chl-a and 6 Chl-b) and carotenoids such as lutein and neoxanthin. is required as a cofactor. Post-translationally, photoregulated by reversible phosphorylation of its threonine residues.

The protein resides in the plastid. It localises to the chloroplast thylakoid membrane. The light-harvesting complex (LHC) functions as a light receptor, it captures and delivers excitation energy to photosystems with which it is closely associated. The sequence is that of Chlorophyll a-b binding protein 2, chloroplastic from Populus euphratica (Euphrates poplar).